Reading from the N-terminus, the 499-residue chain is Glutamyl-tRNA(Gln) amidotransferase subunit A (499 aa).

Active-site charge relay system residues include Lys75 and Ser150. Catalysis depends on Ser174, which acts as the Acyl-ester intermediate.

The protein belongs to the amidase family. GatA subfamily. In terms of assembly, heterotrimer of A, B and C subunits.

The enzyme catalyses L-glutamyl-tRNA(Gln) + L-glutamine + ATP + H2O = L-glutaminyl-tRNA(Gln) + L-glutamate + ADP + phosphate + H(+). In terms of biological role, allows the formation of correctly charged Gln-tRNA(Gln) through the transamidation of misacylated Glu-tRNA(Gln) in organisms which lack glutaminyl-tRNA synthetase. The reaction takes place in the presence of glutamine and ATP through an activated gamma-phospho-Glu-tRNA(Gln). This Ralstonia pickettii (strain 12J) protein is Glutamyl-tRNA(Gln) amidotransferase subunit A.